Here is a 474-residue protein sequence, read N- to C-terminus: ERO1-like protein alpha (474 aa).

An N-terminal signal peptide occupies residues 1-29; the sequence is MVSGCCRLDMSSYVSVLVLCSLLLWGSNS. 8 disulfides stabilise this stretch: Cys-40-Cys-53, Cys-42-Cys-51, Cys-90-Cys-398, Cys-99-Cys-104, Cys-99-Cys-138, Cys-104-Cys-109, Cys-215-Cys-248, and Cys-401-Cys-404. 3 residues coordinate FAD: Arg-194, Thr-196, and Trp-207. The FAD site is built by Ser-259, His-262, Arg-294, and Arg-307. Asn-340 and Asn-391 each carry an N-linked (GlcNAc...) asparagine glycan. N-linked (GlcNAc...) asparagine glycosylation occurs at Asn-430.

Belongs to the EROs family. As to quaternary structure, predominantly monomer. May function both as a monomer and a homodimer. It depends on FAD as a cofactor. In terms of processing, the Cys-99/Cys-104 and Cys-401/Cys-404 disulfide bonds constitute the redox-active center. The Cys-99/Cys-104 disulfide bond may accept electron from protein disulfide isomerase (PDI) and funnel them to the active site disulfide Cys-401/Cys-404.

It is found in the endoplasmic reticulum membrane. Enzyme activity is tightly regulated to prevent the accumulation of reactive oxygen species in the endoplasmic reticulum. Reversibly down-regulated by the formation of disulfide bonds between the active site Cys-99 and Cys-138, and between Cys-104 and Cys-109. Glutathione may be required to regulate its activity in the endoplasmic reticulum. Its function is as follows. Oxidoreductase involved in disulfide bond formation in the endoplasmic reticulum. Efficiently reoxidizes P4HB/PDI, the enzyme catalyzing protein disulfide formation, in order to allow P4HB to sustain additional rounds of disulfide formation. Following P4HB reoxidation, passes its electrons to molecular oxygen via FAD, leading to the production of reactive oxygen species (ROS) in the cell. Required for the folding of immunoglobulins. This Xenopus tropicalis (Western clawed frog) protein is ERO1-like protein alpha.